A 132-amino-acid polypeptide reads, in one-letter code: Small ribosomal subunit protein uS8 (132 aa).

It belongs to the universal ribosomal protein uS8 family. Part of the 30S ribosomal subunit. Contacts proteins S5 and S12.

Its function is as follows. One of the primary rRNA binding proteins, it binds directly to 16S rRNA central domain where it helps coordinate assembly of the platform of the 30S subunit. In Rhizobium meliloti (strain 1021) (Ensifer meliloti), this protein is Small ribosomal subunit protein uS8.